Reading from the N-terminus, the 249-residue chain is Probable proteasome subunit alpha type-2 (249 aa).

Belongs to the peptidase T1A family. In terms of assembly, the 26S proteasome consists of a 20S proteasome core and two 19S regulatory subunits. The 20S proteasome core is composed of 28 subunits that are arranged in four stacked rings, resulting in a barrel-shaped structure. The two end rings are each formed by seven alpha subunits, and the two central rings are each formed by seven beta subunits. The catalytic chamber with the active sites is on the inside of the barrel.

Its subcellular location is the cytoplasm. It localises to the nucleus. Functionally, the proteasome is a multicatalytic proteinase complex which is characterized by its ability to cleave peptides with Arg, Phe, Tyr, Leu, and Glu adjacent to the leaving group at neutral or slightly basic pH. The proteasome has an ATP-dependent proteolytic activity. This is Probable proteasome subunit alpha type-2 (pca-2) from Neurospora crassa (strain ATCC 24698 / 74-OR23-1A / CBS 708.71 / DSM 1257 / FGSC 987).